A 320-amino-acid polypeptide reads, in one-letter code: Undecaprenyl-diphosphatase (320 aa).

Helical transmembrane passes span 9–29, 82–102, 130–150, 161–181, 191–211, 236–256, 265–285, and 296–316; these read FVLI…LEVF, GVAF…WYFW, LGIV…KTFI, LGAI…GEKL, LTMQ…IPGV, FLLG…DLLA, LPLI…IAGL, and VFIW…SAGI.

It belongs to the UppP family.

Its subcellular location is the cell inner membrane. The catalysed reaction is di-trans,octa-cis-undecaprenyl diphosphate + H2O = di-trans,octa-cis-undecaprenyl phosphate + phosphate + H(+). Its function is as follows. Catalyzes the dephosphorylation of undecaprenyl diphosphate (UPP). Confers resistance to bacitracin. The chain is Undecaprenyl-diphosphatase from Nostoc sp. (strain PCC 7120 / SAG 25.82 / UTEX 2576).